The primary structure comprises 441 residues: Histidinol dehydrogenase (441 aa).

Substrate is bound by residues Thr-240, Gln-262, and His-265. Zn(2+) is bound by residues Gln-262 and His-265. Active-site proton acceptor residues include Glu-332 and His-333. His-333, Asp-366, Glu-420, and His-425 together coordinate substrate. Asp-366 contacts Zn(2+). Zn(2+) is bound at residue His-425.

The protein belongs to the histidinol dehydrogenase family. Zn(2+) is required as a cofactor.

The enzyme catalyses L-histidinol + 2 NAD(+) + H2O = L-histidine + 2 NADH + 3 H(+). It functions in the pathway amino-acid biosynthesis; L-histidine biosynthesis; L-histidine from 5-phospho-alpha-D-ribose 1-diphosphate: step 9/9. Functionally, catalyzes the sequential NAD-dependent oxidations of L-histidinol to L-histidinaldehyde and then to L-histidine. The polypeptide is Histidinol dehydrogenase (Streptomyces avermitilis (strain ATCC 31267 / DSM 46492 / JCM 5070 / NBRC 14893 / NCIMB 12804 / NRRL 8165 / MA-4680)).